A 502-amino-acid polypeptide reads, in one-letter code: Sulfate adenylyltransferase (502 aa).

Residues 1 to 167 (MPSPHGGVLQ…LEAIQLPVHY (167 aa)) are N-terminal. The tract at residues 168-393 (DYPGWRKTPA…LRESNPSRPK (226 aa)) is catalytic. Q195 is a binding site for sulfate. Residues 195–198 (QTRN) and 289–292 (GRDH) each bind ATP. Active-site residues include T196, R197, and N198. R197 provides a ligand contact to sulfate. A293 is a binding site for sulfate. ATP is bound at residue V331. Positions 394–502 (QGFALVLSET…FLEDQGFFQF (109 aa)) are required for oligomerization; adenylyl-sulfate kinase-like.

It belongs to the sulfate adenylyltransferase family. In terms of assembly, homohexamer. Dimer of trimers.

Its subcellular location is the cytoplasm. It catalyses the reaction sulfate + ATP + H(+) = adenosine 5'-phosphosulfate + diphosphate. Its pathway is sulfur metabolism; hydrogen sulfide biosynthesis; sulfite from sulfate: step 1/3. Its function is as follows. Catalyzes the first intracellular reaction of sulfate assimilation, forming adenosine-5'-phosphosulfate (APS) from inorganic sulfate and ATP. Plays an important role in sulfate activation as a component of the biosynthesis pathway of sulfur-containing amino acids. This Kluyveromyces lactis (strain ATCC 8585 / CBS 2359 / DSM 70799 / NBRC 1267 / NRRL Y-1140 / WM37) (Yeast) protein is Sulfate adenylyltransferase.